Consider the following 210-residue polypeptide: uncharacterized protein (210 aa).

The first 17 residues, 1–17 (MKRTAVSLCLLTGLLSG), serve as a signal peptide directing secretion. The N-palmitoyl cysteine moiety is linked to residue Cys18. Cys18 is lipidated: S-diacylglycerol cysteine. Polar residues predominate over residues 176–195 (EMKTSPQGSPVSENENANGE). Positions 176–210 (EMKTSPQGSPVSENENANGETRQDMKIDRNDKNAR) are disordered. Residues 196-210 (TRQDMKIDRNDKNAR) are compositionally biased toward basic and acidic residues.

Its subcellular location is the cell membrane. This is an uncharacterized protein from Bacillus subtilis (strain 168).